The primary structure comprises 112 residues: Nucleoid-associated protein FTM_1023 (112 aa).

It belongs to the YbaB/EbfC family. Homodimer.

It localises to the cytoplasm. It is found in the nucleoid. Its function is as follows. Binds to DNA and alters its conformation. May be involved in regulation of gene expression, nucleoid organization and DNA protection. In Francisella tularensis subsp. mediasiatica (strain FSC147), this protein is Nucleoid-associated protein FTM_1023.